Here is a 558-residue protein sequence, read N- to C-terminus: Dihydroxy-acid dehydratase (558 aa).

Position 78 (D78) interacts with Mg(2+). C119 is a [2Fe-2S] cluster binding site. Residues D120 and K121 each contribute to the Mg(2+) site. At K121 the chain carries N6-carboxylysine. C192 contributes to the [2Fe-2S] cluster binding site. E446 is a Mg(2+) binding site. Catalysis depends on S472, which acts as the Proton acceptor.

This sequence belongs to the IlvD/Edd family. In terms of assembly, homodimer. [2Fe-2S] cluster is required as a cofactor. Mg(2+) serves as cofactor.

The enzyme catalyses (2R)-2,3-dihydroxy-3-methylbutanoate = 3-methyl-2-oxobutanoate + H2O. The catalysed reaction is (2R,3R)-2,3-dihydroxy-3-methylpentanoate = (S)-3-methyl-2-oxopentanoate + H2O. Its pathway is amino-acid biosynthesis; L-isoleucine biosynthesis; L-isoleucine from 2-oxobutanoate: step 3/4. It participates in amino-acid biosynthesis; L-valine biosynthesis; L-valine from pyruvate: step 3/4. Its function is as follows. Functions in the biosynthesis of branched-chain amino acids. Catalyzes the dehydration of (2R,3R)-2,3-dihydroxy-3-methylpentanoate (2,3-dihydroxy-3-methylvalerate) into 2-oxo-3-methylpentanoate (2-oxo-3-methylvalerate) and of (2R)-2,3-dihydroxy-3-methylbutanoate (2,3-dihydroxyisovalerate) into 2-oxo-3-methylbutanoate (2-oxoisovalerate), the penultimate precursor to L-isoleucine and L-valine, respectively. In Campylobacter lari (strain RM2100 / D67 / ATCC BAA-1060), this protein is Dihydroxy-acid dehydratase.